Here is a 146-residue protein sequence, read N- to C-terminus: METLTAISRWLAKQHVVTWCVQHEGELWCANAFYLFDAQKVAFYVLTEEKTRHAQMSGPRAPVAGTVNGQPKTVARIRGIQFKGEIRKLEGEESDAARQAYLRRFPVARMLPAPVWEIRLDEIKFTDNTLGFGKKMHWLRSPIRSL.

This sequence belongs to the UPF0306 family.

The polypeptide is UPF0306 protein CKO_04548 (Citrobacter koseri (strain ATCC BAA-895 / CDC 4225-83 / SGSC4696)).